Here is a 182-residue protein sequence, read N- to C-terminus: MSDNLALHGTTILCLKKNEEIIIAADGQVSHGNTILKSTARKLRTIANNKIIAGFAGSTADGLALFEKLEVKIEQHKHNLLRSAVELAKDWRSDKYLRRLEAMMIVADRNHILILTGNGDVVEPENNVAAIGSGGLFALSAARALMSYENNLTAEEIALKSMNIAADLCVFSNHNIIMEKVV.

Threonine 10 is a catalytic residue. Positions 166, 169, and 172 each coordinate Na(+).

Belongs to the peptidase T1B family. HslV subfamily. A double ring-shaped homohexamer of HslV is capped on each side by a ring-shaped HslU homohexamer. The assembly of the HslU/HslV complex is dependent on binding of ATP.

Its subcellular location is the cytoplasm. The catalysed reaction is ATP-dependent cleavage of peptide bonds with broad specificity.. Allosterically activated by HslU binding. Protease subunit of a proteasome-like degradation complex believed to be a general protein degrading machinery. The sequence is that of ATP-dependent protease subunit HslV from Rickettsia felis (strain ATCC VR-1525 / URRWXCal2) (Rickettsia azadi).